The primary structure comprises 644 residues: DNA gyrase subunit B (644 aa).

Residues 429–543 enclose the Toprim domain; that stretch reads CEIFLVEGDS…AGYVYIAQPP (115 aa). E435, D508, and D510 together coordinate Mg(2+).

Belongs to the type II topoisomerase GyrB family. As to quaternary structure, heterotetramer, composed of two GyrA and two GyrB chains. In the heterotetramer, GyrA contains the active site tyrosine that forms a transient covalent intermediate with DNA, while GyrB binds cofactors and catalyzes ATP hydrolysis. Mg(2+) serves as cofactor. Mn(2+) is required as a cofactor. It depends on Ca(2+) as a cofactor.

It is found in the cytoplasm. The catalysed reaction is ATP-dependent breakage, passage and rejoining of double-stranded DNA.. In terms of biological role, a type II topoisomerase that negatively supercoils closed circular double-stranded (ds) DNA in an ATP-dependent manner to modulate DNA topology and maintain chromosomes in an underwound state. Negative supercoiling favors strand separation, and DNA replication, transcription, recombination and repair, all of which involve strand separation. Also able to catalyze the interconversion of other topological isomers of dsDNA rings, including catenanes and knotted rings. Type II topoisomerases break and join 2 DNA strands simultaneously in an ATP-dependent manner. In Staphylococcus aureus (strain COL), this protein is DNA gyrase subunit B.